Here is an 860-residue protein sequence, read N- to C-terminus: Ras GTPase-activating-like protein gapA (860 aa).

The segment covering 1–20 has biased composition (acidic residues); that stretch reads MEGLEIEDEDVILLDEDDDS. Positions 1–48 are disordered; it reads MEGLEIEDEDVILLDEDDDSSSSSTVNNSSSNIKNNGNTNNNIGNDDS. Residues 21–46 show a composition bias toward low complexity; it reads SSSSTVNNSSSNIKNNGNTNNNIGND. Residues 146–185 are a coiled coil; that stretch reads AEIQELKRNMVAEIRRNHLLERDVNKLDKRIALLIKHRSN. The Ras-GAP domain occupies 269-515; that stretch reads FLILSLFRLA…SIVRQYLEDL (247 aa). Positions 663–732 form a coiled coil; it reads NNPQLSSNAE…TIALRDLRKH (70 aa).

As to quaternary structure, heterotetramer. Quaternary complex with activated rac1A, ctxA and ctxB in the absence of rgaA.

Part of signaling pathway that is required for completion of cytokinesis. gapA and rgaA control cortexillin localization to the cleavage furrow and hence may be involved in cleavage of the midbody in the final stage of cytokinesis by regulating the actin cytoskeleton. Forms a complex by linking activated rac1A to ctxA in the absence of rgaA. Assembly of this complex is necessary for the recruitment of cortexillin to the midzone of the dividing cell. This chain is Ras GTPase-activating-like protein gapA (gapA), found in Dictyostelium discoideum (Social amoeba).